The following is a 273-amino-acid chain: Ribosomal RNA small subunit methyltransferase A (273 aa).

Residues asparagine 17, leucine 19, glycine 44, glutamate 65, and asparagine 111 each contribute to the S-adenosyl-L-methionine site.

The protein belongs to the class I-like SAM-binding methyltransferase superfamily. rRNA adenine N(6)-methyltransferase family. RsmA subfamily.

It localises to the cytoplasm. It carries out the reaction adenosine(1518)/adenosine(1519) in 16S rRNA + 4 S-adenosyl-L-methionine = N(6)-dimethyladenosine(1518)/N(6)-dimethyladenosine(1519) in 16S rRNA + 4 S-adenosyl-L-homocysteine + 4 H(+). Its function is as follows. Specifically dimethylates two adjacent adenosines (A1518 and A1519) in the loop of a conserved hairpin near the 3'-end of 16S rRNA in the 30S particle. May play a critical role in biogenesis of 30S subunits. In Buchnera aphidicola subsp. Acyrthosiphon pisum (strain APS) (Acyrthosiphon pisum symbiotic bacterium), this protein is Ribosomal RNA small subunit methyltransferase A.